Reading from the N-terminus, the 304-residue chain is Type II methyltransferase M.HindV (304 aa).

The SAM-dependent MTase C5-type domain occupies 1 to 299 (MKCVDLFSGC…SAIINFEKEP (299 aa)). Cysteine 75 is an active-site residue.

This sequence belongs to the class I-like SAM-binding methyltransferase superfamily. C5-methyltransferase family.

It catalyses the reaction a 2'-deoxycytidine in DNA + S-adenosyl-L-methionine = a 5-methyl-2'-deoxycytidine in DNA + S-adenosyl-L-homocysteine + H(+). In terms of biological role, a methylase, recognizes the double-stranded sequence 5'-GRCGYC-3', methylates C-? on both strands, and protects the DNA from cleavage by the HindV endonuclease. This chain is Type II methyltransferase M.HindV (hindVM), found in Haemophilus influenzae (strain ATCC 51907 / DSM 11121 / KW20 / Rd).